The following is a 375-amino-acid chain: Trichodiene synthase (375 aa).

This sequence belongs to the trichodiene synthase family.

It carries out the reaction (2E,6E)-farnesyl diphosphate = trichodiene + diphosphate. The protein operates within sesquiterpene biosynthesis; trichothecene biosynthesis. Functionally, TS is a member of the terpene cyclase group of enzymes. It catalyzes the isomerization and cyclization of farnesyl pyro-phosphate to form trichodiene, the first cyclic intermediate in the biosynthetic pathway for trichothecenes. It serves to branch trichothecene biosynthesis from the isoprenoid pathway. This is Trichodiene synthase (TRI5) from Fusarium mesoamericanum.